The following is a 338-amino-acid chain: Lipoate-protein ligase A (338 aa).

The region spanning 29–216 is the BPL/LPL catalytic domain; it reads DPNQRVLFLW…AFFSHYGERV (188 aa). ATP-binding positions include Arg-71, 76-79, and Lys-134; that span reads GAVF. Lys-134 contacts (R)-lipoate.

The protein belongs to the LplA family. In terms of assembly, monomer.

It is found in the cytoplasm. It catalyses the reaction L-lysyl-[lipoyl-carrier protein] + (R)-lipoate + ATP = N(6)-[(R)-lipoyl]-L-lysyl-[lipoyl-carrier protein] + AMP + diphosphate + H(+). The protein operates within protein modification; protein lipoylation via exogenous pathway; protein N(6)-(lipoyl)lysine from lipoate: step 1/2. It functions in the pathway protein modification; protein lipoylation via exogenous pathway; protein N(6)-(lipoyl)lysine from lipoate: step 2/2. Its function is as follows. Catalyzes both the ATP-dependent activation of exogenously supplied lipoate to lipoyl-AMP and the transfer of the activated lipoyl onto the lipoyl domains of lipoate-dependent enzymes. The protein is Lipoate-protein ligase A of Aeromonas hydrophila subsp. hydrophila (strain ATCC 7966 / DSM 30187 / BCRC 13018 / CCUG 14551 / JCM 1027 / KCTC 2358 / NCIMB 9240 / NCTC 8049).